The chain runs to 1253 residues: Cytoplasmic FMR1-interacting protein 1 homolog (1253 aa).

It belongs to the CYFIP family.

The protein localises to the cytoplasm. It localises to the perinuclear region. Its subcellular location is the cell projection. It is found in the lamellipodium. The protein resides in the ruffle. The protein localises to the synapse. It localises to the synaptosome. Its function is as follows. Involved in formation of membrane ruffles and lamellipodia protrusions and in axon outgrowth. Binds to F-actin but not to RNA. The chain is Cytoplasmic FMR1-interacting protein 1 homolog from Danio rerio (Zebrafish).